The sequence spans 517 residues: Bifunctional purine biosynthesis protein PurH (517 aa).

Positions 1-145 (MSPLALVSVS…KNHKDVSVLV (145 aa)) constitute an MGS-like domain.

This sequence belongs to the PurH family.

It carries out the reaction (6R)-10-formyltetrahydrofolate + 5-amino-1-(5-phospho-beta-D-ribosyl)imidazole-4-carboxamide = 5-formamido-1-(5-phospho-D-ribosyl)imidazole-4-carboxamide + (6S)-5,6,7,8-tetrahydrofolate. The catalysed reaction is IMP + H2O = 5-formamido-1-(5-phospho-D-ribosyl)imidazole-4-carboxamide. It functions in the pathway purine metabolism; IMP biosynthesis via de novo pathway; 5-formamido-1-(5-phospho-D-ribosyl)imidazole-4-carboxamide from 5-amino-1-(5-phospho-D-ribosyl)imidazole-4-carboxamide (10-formyl THF route): step 1/1. It participates in purine metabolism; IMP biosynthesis via de novo pathway; IMP from 5-formamido-1-(5-phospho-D-ribosyl)imidazole-4-carboxamide: step 1/1. The protein is Bifunctional purine biosynthesis protein PurH of Prochlorococcus marinus (strain MIT 9301).